Consider the following 131-residue polypeptide: Small ribosomal subunit protein bS6 (131 aa).

Positions 92 to 131 are disordered; sequence RVDEHKDGPSVQMQKRDERERGDRGDRGERRERRDRDDRN.

This sequence belongs to the bacterial ribosomal protein bS6 family.

Functionally, binds together with bS18 to 16S ribosomal RNA. The protein is Small ribosomal subunit protein bS6 of Paracoccus denitrificans (strain Pd 1222).